Consider the following 241-residue polypeptide: Putative CRISPR-associated endoribonuclease-like protein Cas6 (241 aa).

This sequence belongs to the CRISPR-associated protein Cas6/Cse3/CasE family. As to quaternary structure, binds crRNA.

Functionally, CRISPR (clustered regularly interspaced short palindromic repeat), is an adaptive immune system that provides protection against mobile genetic elements (viruses, transposable elements and conjugative plasmids). CRISPR clusters contain sequences complementary to antecedent mobile elements and target invading nucleic acids. CRISPR clusters are transcribed and processed into CRISPR RNA (crRNA), also called psiRNA (prokaryotic silencing) in this organism (Potential). This chain is Putative CRISPR-associated endoribonuclease-like protein Cas6 (cas6b), found in Pyrococcus furiosus (strain ATCC 43587 / DSM 3638 / JCM 8422 / Vc1).